The sequence spans 516 residues: Probable inorganic phosphate transporter 1-6 (516 aa).

N-acetylalanine is present on Ala-2. The Cytoplasmic segment spans residues 2 to 25 (ANEEQGSILKALDVAKTQWYHVTA). The chain crosses the membrane as a helical span at residues 26 to 46 (VVVSGMGFFTDSYDLFVISLI). The Extracellular portion of the chain corresponds to 47 to 71 (TKLLGRIYYQVPGSSSPGSLPDGIS). A helical transmembrane segment spans residues 72–92 (AAVSGVAFAGTFIGQIFFGCL). The Cytoplasmic portion of the chain corresponds to 93–100 (GDKLGRKR). The helical transmembrane segment at 101–121 (VYGLTLLIMTICSICSGLSLG) threads the bilayer. The Extracellular portion of the chain corresponds to 122–132 (RDPKTVMVTLC). The helical transmembrane segment at 133 to 153 (FFRFWLGFGIGGDYPLSATIM) threads the bilayer. The Cytoplasmic segment spans residues 154–162 (SEYSNKRTR). A helical membrane pass occupies residues 163 to 183 (GAFIAAVFGMQGIGILAAGAV). At 184-212 (SLLVSAVFESKFPSRAYILDGAASTVPQA) the chain is on the extracellular side. The helical transmembrane segment at 213-233 (DYVWRIILMVGALPALLTYYW) threads the bilayer. Residues 234–293 (RMKMPETARYTALVSKNAEQAALDMTKVLNVDIEASAAKNDQARVSSDEFGLFSMKFLRR) are Cytoplasmic-facing. Residues 294–314 (HGLHLLGTASTWFLLDIAFYS) form a helical membrane-spanning segment. Over 315-349 (QNLFQKDIFTTIGWLPSAKTMNAIQELYMIAKAQT) the chain is Extracellular. A helical membrane pass occupies residues 350–370 (IIACCSTVPGYFFTVGFIDYM). Over 371 to 374 (GRKK) the chain is Cytoplasmic. A helical membrane pass occupies residues 375–395 (IQIMGFAMMTIFMLSLAIPYH). The Extracellular segment spans residues 396-403 (HWTLPANR). The helical transmembrane segment at 404-424 (IGFVVLYSFTFFFSNFGPNAT) threads the bilayer. The Cytoplasmic segment spans residues 425-442 (TFIVPAEIFPARIRSTCH). A helical transmembrane segment spans residues 443-463 (GISAASGKAGAMVGSFGFSAL). The Extracellular portion of the chain corresponds to 464–471 (VKALGMSN). A helical membrane pass occupies residues 472–492 (TLYIMAGINLLGLLLTFTIPE). Residues 493–516 (TNGKSLEELSGETEPEKIKEKIVV) lie on the Cytoplasmic side of the membrane.

It belongs to the major facilitator superfamily. Phosphate:H(+) symporter (TC 2.A.1.9) family. Expressed in anthers, tapetumand mature pollen and, to a lower extent, in hydathodes and vascular tissues of cotyledons of flowering plants.

The protein resides in the membrane. Its function is as follows. High-affinity transporter for external inorganic phosphate. The polypeptide is Probable inorganic phosphate transporter 1-6 (PHT1-6) (Arabidopsis thaliana (Mouse-ear cress)).